The primary structure comprises 268 residues: tRNA pseudouridine synthase A (268 aa).

Asp52 serves as the catalytic Nucleophile. Substrate is bound at residue Tyr113.

The protein belongs to the tRNA pseudouridine synthase TruA family. Homodimer.

It carries out the reaction uridine(38/39/40) in tRNA = pseudouridine(38/39/40) in tRNA. Functionally, formation of pseudouridine at positions 38, 39 and 40 in the anticodon stem and loop of transfer RNAs. This chain is tRNA pseudouridine synthase A, found in Chlamydia felis (strain Fe/C-56) (Chlamydophila felis).